A 1380-amino-acid polypeptide reads, in one-letter code: Respiration factor 2 (1380 aa).

C2H2-type zinc fingers lie at residues 151–173 and 179–202; these read FLCP…QHSH and YLCI…QKLH. The interval 208–231 is disordered; sequence TGDPRRMTPAPNSTSSFASKRRHS. Serine 231 and serine 322 each carry phosphoserine. Disordered regions lie at residues 413 to 445, 544 to 584, 624 to 643, and 652 to 688; these read NLNL…NSNN, SPKN…NIDP, SRSS…SLNH, and LNLS…KRRR. Residues 424–445 are compositionally biased toward low complexity; that stretch reads QQQQQQQQQQNSTSSTIVNSNN. Position 544 is a phosphoserine (serine 544). Residues 544 to 569 show a composition bias toward polar residues; that stretch reads SPKNPPTTVSDSSSTINFNPGTNNLL. The segment covering 575 to 584 has biased composition (basic and acidic residues); the sequence is PNDKDSNIDP. A compositionally biased stretch (low complexity) spans 624-634; the sequence is SRSSIPNKSPP. Serine 632 carries the phosphoserine modification. Polar residues predominate over residues 652–681; that stretch reads LNLSLNGSTDLPSTPQNQLKEPSYSDPISH.

It belongs to the RSF2/TDA9 family.

The protein resides in the nucleus. In terms of biological role, transcription factor that regulates expression of both nuclear and mitochondrial genes, and more specifically those required for glycerol-based growth and respiration. In Saccharomyces cerevisiae (strain ATCC 204508 / S288c) (Baker's yeast), this protein is Respiration factor 2 (RSF2).